The chain runs to 605 residues: Alanine--tRNA ligase (605 aa).

Zn(2+) is bound by residues H463, H467, C565, and H569.

Belongs to the class-II aminoacyl-tRNA synthetase family. It depends on Zn(2+) as a cofactor.

The protein resides in the cytoplasm. It carries out the reaction tRNA(Ala) + L-alanine + ATP = L-alanyl-tRNA(Ala) + AMP + diphosphate. Functionally, catalyzes the attachment of alanine to tRNA(Ala) in a two-step reaction: alanine is first activated by ATP to form Ala-AMP and then transferred to the acceptor end of tRNA(Ala). Also edits incorrectly charged Ser-tRNA(Ala) and Gly-tRNA(Ala) via its editing domain. The sequence is that of Alanine--tRNA ligase (alaS) from Treponema pallidum (strain Nichols).